The following is a 688-amino-acid chain: ERI1 exoribonuclease 2 (688 aa).

Residues 37 to 226 (LIVVDFESTC…DDSRNTALLA (190 aa)) form the Exonuclease domain. The Mg(2+) site is built by Asp41, Glu43, and Asp156. The active-site Proton acceptor is the Glu43. Glu43 is an AMP binding site. The Proton acceptor role is filled by His213. His213 lines the AMP pocket. Asp218 provides a ligand contact to Mg(2+). Polar residues predominate over residues 337–360 (VDQLHSPTLNPPLTMQKPSKSDQL). 2 disordered regions span residues 337–367 (VDQL…DSSK) and 523–546 (DPLL…TKRQ). Residues Cys594, Cys596, Cys619, and Cys631 each coordinate Zn(2+). The GRF-type zinc-finger motif lies at 594–640 (CKCGRRSKRLIVSNNGPNHGKAFYCCPVGKYQQDRKCCGYFKWEQTL).

The protein belongs to the ERI2 family. It depends on Mg(2+) as a cofactor.

This is ERI1 exoribonuclease 2 (Eri2) from Mus musculus (Mouse).